The primary structure comprises 429 residues: S-adenosylmethionine synthase (429 aa).

Histidine 14 serves as a coordination point for ATP. Aspartate 16 contributes to the Mg(2+) binding site. Glutamate 42 lines the K(+) pocket. 2 residues coordinate L-methionine: glutamate 55 and glutamine 98. Positions 98 to 108 (QSADINRGVDR) are flexible loop. Residues 165–167 (DAK), 252–253 (KF), aspartate 261, 267–268 (RK), alanine 284, and lysine 288 each bind ATP. Aspartate 261 is an L-methionine binding site. Residue lysine 292 participates in L-methionine binding.

Belongs to the AdoMet synthase family. As to quaternary structure, homotetramer; dimer of dimers. Mg(2+) is required as a cofactor. K(+) serves as cofactor.

It localises to the cytoplasm. The catalysed reaction is L-methionine + ATP + H2O = S-adenosyl-L-methionine + phosphate + diphosphate. Its pathway is amino-acid biosynthesis; S-adenosyl-L-methionine biosynthesis; S-adenosyl-L-methionine from L-methionine: step 1/1. In terms of biological role, catalyzes the formation of S-adenosylmethionine (AdoMet) from methionine and ATP. The overall synthetic reaction is composed of two sequential steps, AdoMet formation and the subsequent tripolyphosphate hydrolysis which occurs prior to release of AdoMet from the enzyme. The chain is S-adenosylmethionine synthase from Porphyromonas gingivalis (strain ATCC BAA-308 / W83).